We begin with the raw amino-acid sequence, 106 residues long: uncharacterized protein (106 aa).

This is an uncharacterized protein from Saccharomyces cerevisiae (strain ATCC 204508 / S288c) (Baker's yeast).